We begin with the raw amino-acid sequence, 841 residues long: Protein translocase subunit SecA (841 aa).

Residues Gln-85, 103-107 (GEGKT), and Asp-492 each bind ATP. Residues 786–812 (REEVVQGQTTAHQPQDGDEAKQAKKAP) form a disordered region. Zn(2+) contacts are provided by Cys-825, Cys-827, Cys-836, and Cys-837.

It belongs to the SecA family. In terms of assembly, monomer and homodimer. Part of the essential Sec protein translocation apparatus which comprises SecA, SecYEG and auxiliary proteins SecDF. Other proteins may also be involved. Zn(2+) serves as cofactor.

It localises to the cell membrane. It is found in the cytoplasm. It carries out the reaction ATP + H2O + cellular proteinSide 1 = ADP + phosphate + cellular proteinSide 2.. Part of the Sec protein translocase complex. Interacts with the SecYEG preprotein conducting channel. Has a central role in coupling the hydrolysis of ATP to the transfer of proteins into and across the cell membrane, serving as an ATP-driven molecular motor driving the stepwise translocation of polypeptide chains across the membrane. This chain is Protein translocase subunit SecA, found in Bacillus velezensis (strain DSM 23117 / BGSC 10A6 / LMG 26770 / FZB42) (Bacillus amyloliquefaciens subsp. plantarum).